The primary structure comprises 423 residues: CinA-like protein (423 aa).

Belongs to the CinA family.

The chain is CinA-like protein from Chlorobium chlorochromatii (strain CaD3).